Here is a 357-residue protein sequence, read N- to C-terminus: MPRPTVARIDLDALKHNFRRARELAGTAYAMAVVKADGYGHGIRSVADALAPETSRFAVACIEEAIAIRGAGHRHSVVLLQGTHQKDDLAECERSGFEPVLHCQQQLSWLGAGRSPRFWIKVNTGMNRLGFRPEELPEVMAGLEEAGLKHLAIGFVTHFACADDSDSEMTGLQTRIFERAVAPWPDLMRSVGNSAAHFRPNQPLYEWSRPGIMLYGASPMEGKTGAELGLCPAMTLQAPLITTRVVRAGESVGYGASWTASQDTRMGMVAIGYADGYPRHAGTGTPAAVRGQRIRLLGRVSMDMLAVDLSAVPEAREGDMVELWGKTVSVDEVATCAGTIGYELLTGVTSRVPRVHE.

K35 acts as the Proton acceptor; specific for D-alanine in catalysis. At K35 the chain carries N6-(pyridoxal phosphate)lysine. R128 serves as a coordination point for substrate. Residue Y254 is the Proton acceptor; specific for L-alanine of the active site. M302 contacts substrate.

The protein belongs to the alanine racemase family. The cofactor is pyridoxal 5'-phosphate.

It catalyses the reaction L-alanine = D-alanine. It participates in amino-acid biosynthesis; D-alanine biosynthesis; D-alanine from L-alanine: step 1/1. Functionally, catalyzes the interconversion of L-alanine and D-alanine. May also act on other amino acids. The chain is Alanine racemase (alr) from Marinobacter nauticus (strain ATCC 700491 / DSM 11845 / VT8) (Marinobacter aquaeolei).